We begin with the raw amino-acid sequence, 250 residues long: Acetoacetate decarboxylase 1 (250 aa).

Catalysis depends on K120, which acts as the Schiff-base intermediate with acetoacetate.

This sequence belongs to the ADC family.

It catalyses the reaction acetoacetate + H(+) = acetone + CO2. Functionally, catalyzes the conversion of acetoacetate to acetone and carbon dioxide. This is Acetoacetate decarboxylase 1 from Bradyrhizobium diazoefficiens (strain JCM 10833 / BCRC 13528 / IAM 13628 / NBRC 14792 / USDA 110).